Consider the following 152-residue polypeptide: Transcriptional regulator MraZ (152 aa).

SpoVT-AbrB domains are found at residues 5–52 and 81–124; these read ATMV…PLPE and ASEC…DEQT.

Belongs to the MraZ family. In terms of assembly, forms oligomers.

The protein resides in the cytoplasm. It localises to the nucleoid. Negatively regulates its own expression and that of the subsequent genes in the proximal part of the division and cell wall (dcw) gene cluster. Acts by binding directly to DNA. May also regulate the expression of genes outside the dcw cluster. The chain is Transcriptional regulator MraZ from Serratia proteamaculans (strain 568).